Here is a 400-residue protein sequence, read N- to C-terminus: Imidazolonepropionase (400 aa).

Histidine 70 and histidine 72 together coordinate Fe(3+). Histidine 70 and histidine 72 together coordinate Zn(2+). The 4-imidazolone-5-propanoate site is built by arginine 79, tyrosine 142, and histidine 175. Tyrosine 142 lines the N-formimidoyl-L-glutamate pocket. A Fe(3+)-binding site is contributed by histidine 239. Histidine 239 is a binding site for Zn(2+). A 4-imidazolone-5-propanoate-binding site is contributed by glutamine 242. Aspartate 314 contributes to the Fe(3+) binding site. Aspartate 314 is a Zn(2+) binding site. Positions 316 and 318 each coordinate N-formimidoyl-L-glutamate. A 4-imidazolone-5-propanoate-binding site is contributed by threonine 319.

It belongs to the metallo-dependent hydrolases superfamily. HutI family. The cofactor is Zn(2+). Requires Fe(3+) as cofactor.

The protein resides in the cytoplasm. The enzyme catalyses 4-imidazolone-5-propanoate + H2O = N-formimidoyl-L-glutamate. It functions in the pathway amino-acid degradation; L-histidine degradation into L-glutamate; N-formimidoyl-L-glutamate from L-histidine: step 3/3. Its function is as follows. Catalyzes the hydrolytic cleavage of the carbon-nitrogen bond in imidazolone-5-propanoate to yield N-formimidoyl-L-glutamate. It is the third step in the universal histidine degradation pathway. In Methylobacterium sp. (strain 4-46), this protein is Imidazolonepropionase.